Consider the following 170-residue polypeptide: Adenine phosphoribosyltransferase (170 aa).

This sequence belongs to the purine/pyrimidine phosphoribosyltransferase family. In terms of assembly, homodimer.

The protein localises to the cytoplasm. The catalysed reaction is AMP + diphosphate = 5-phospho-alpha-D-ribose 1-diphosphate + adenine. Its pathway is purine metabolism; AMP biosynthesis via salvage pathway; AMP from adenine: step 1/1. In terms of biological role, catalyzes a salvage reaction resulting in the formation of AMP, that is energically less costly than de novo synthesis. This Bacillus pumilus (strain SAFR-032) protein is Adenine phosphoribosyltransferase.